A 507-amino-acid polypeptide reads, in one-letter code: ATP synthase subunit alpha, chloroplastic (507 aa).

170–177 contacts ATP; it reads GDRQTGKT.

Belongs to the ATPase alpha/beta chains family. As to quaternary structure, F-type ATPases have 2 components, CF(1) - the catalytic core - and CF(0) - the membrane proton channel. CF(1) has five subunits: alpha(3), beta(3), gamma(1), delta(1), epsilon(1). CF(0) has four main subunits: a, b, b' and c.

Its subcellular location is the plastid. It localises to the chloroplast thylakoid membrane. It catalyses the reaction ATP + H2O + 4 H(+)(in) = ADP + phosphate + 5 H(+)(out). Functionally, produces ATP from ADP in the presence of a proton gradient across the membrane. The alpha chain is a regulatory subunit. This chain is ATP synthase subunit alpha, chloroplastic, found in Phalaenopsis aphrodite subsp. formosana (Moth orchid).